Here is a 220-residue protein sequence, read N- to C-terminus: WAP four-disulfide core domain protein 1 (220 aa).

Positions 1 to 31 are cleaved as a signal peptide; the sequence is MPLTGVGPGSCRRQIIRALCLLLLLLHAGSA. A disordered region spans residues 46-70; the sequence is KSRAEEAGAPGGPRQPRADRCPPPP. Residues 59–108 form the WAP domain; that stretch reads RQPRADRCPPPPRTLPPGACQAARCQADSECPRHRRCCYNGCAYACLEAV. Disulfide bonds link Cys66-Cys96, Cys78-Cys100, Cys83-Cys95, and Cys89-Cys104. The disordered stretch occupies residues 199–220; it reads EYPEGDSKNVAEPGRGQQKHFQ.

The protein localises to the secreted. Its function is as follows. Has growth inhibitory activity. The sequence is that of WAP four-disulfide core domain protein 1 (WFDC1) from Homo sapiens (Human).